The primary structure comprises 27 residues: Phospholipase A2 taicatoxin (27 aa).

Belongs to the phospholipase A2 family. Group I subfamily. As to quaternary structure, heterotrimer composed of an alpha-neurotoxin-like peptide of 8 kDa (AC P0CJ35), this neurotoxic phospholipase of 16 kDa and a serine protease inhibitor of 7 kDa (AC B7S4N9) at an approximate stoichiometry of 1:1:4; non-covalently linked. Ca(2+) serves as cofactor. Post-translationally, contains 7 disulfide bonds. In terms of tissue distribution, expressed by the venom gland.

The protein resides in the secreted. The enzyme catalyses a 1,2-diacyl-sn-glycero-3-phosphocholine + H2O = a 1-acyl-sn-glycero-3-phosphocholine + a fatty acid + H(+). Functionally, heterotrimer: blocks the voltage-dependent L-type calcium channels from the heart, and the small conductance calcium-activated potassium channels in the chromaffin cells and in the brain. Is very toxic to mice. In terms of biological role, monomer: Snake venom phospholipase A2 (PLA2) that has neurotoxic activities. Voltage-dependently affects ionic currents in chick (Gallus domesticus) dorsal root ganglion cells. PLA2 catalyzes the calcium-dependent hydrolysis of the 2-acyl groups in 3-sn-phosphoglycerides. This is Phospholipase A2 taicatoxin from Oxyuranus scutellatus scutellatus (Australian taipan).